The chain runs to 382 residues: uncharacterized protein (382 aa).

The next 12 helical transmembrane spans lie at 14-34 (GLLL…LWLA), 45-65 (MVSS…GYLI), 75-95 (YLAS…VGFW), 102-122 (FIAG…LMCS), 131-151 (LLAA…LLVS), 157-177 (LLHV…PLLF), 204-224 (LGVN…GLMP), 235-255 (ASIG…QWPV), 265-284 (LLVL…VMLT), 289-311 (APAL…AWAC), 325-345 (ALLL…AMLM), and 349-369 (SDNL…LMLL).

Belongs to the major facilitator superfamily. YcaD (TC 2.A.1.26) family.

It localises to the cell inner membrane. This is an uncharacterized protein from Salmonella arizonae (strain ATCC BAA-731 / CDC346-86 / RSK2980).